We begin with the raw amino-acid sequence, 961 residues long: Phosphofurin acidic cluster sorting protein 1 (961 aa).

Residues 1–19 (MAERGGAGGGPGGSGGGSS) show a composition bias toward gly residues. Disordered regions lie at residues 1–70 (MAER…SSST) and 76–95 (VAVASGSAPPGGPGPGRTPA). Ala2 carries the post-translational modification N-acetylalanine. Over residues 20–34 (QRGSGVAQSPQQQPQ) the composition is skewed to low complexity. Ser28 bears the Phosphoserine mark. Residues 35–46 (QQPPQPQQPTPP) are compositionally biased toward pro residues. Thr44 bears the Phosphothreonine mark. Low complexity predominate over residues 51 to 70 (ATSSSSSTSAAAASSSSSST). At Tyr249 the chain carries Phosphotyrosine. Positions 260 to 271 (GIKSKLSDRSPD) are enriched in basic and acidic residues. Disordered regions lie at residues 260 to 297 (GIKSKLSDRSPDIDNYSEEEEESFSSEQEGSDDPLHGQ) and 375 to 426 (NPSD…GKDT). Acidic residues predominate over residues 274-291 (NYSEEEEESFSSEQEGSD). A coiled-coil region spans residues 351–375 (HVSREQIREVEEDLDELYDSLEMYN). 2 positions are modified to phosphoserine: Ser377 and Ser379. The segment covering 404–426 (MSQSSSQTEIGSLNSKGSLGKDT) has biased composition (polar residues). Residues Ser428 and Ser493 each carry the phosphoserine modification. Disordered regions lie at residues 475 to 540 (EKVK…HSTQ) and 758 to 802 (SPST…SMSS). Thr502 bears the Phosphothreonine mark. Ser517, Ser526, Ser527, Ser529, and Ser532 each carry phosphoserine. Over residues 768–802 (SPVVSLTVPSTSPPSSSGLSRDATATPPSSPSMSS) the composition is skewed to low complexity.

It belongs to the PACS family. In terms of assembly, associates with AP-1 and AP-3 but not with AP-2 complexes. Interacts with FURIN. Forms a ternary complex with FURIN and AP-1. Interacts with PKD2 (via acidic region). Interacts with SORL1. Interacts with WDR37.

It is found in the golgi apparatus. Its subcellular location is the trans-Golgi network. Its function is as follows. Coat protein that is involved in the localization of trans-Golgi network (TGN) membrane proteins that contain acidic cluster sorting motifs. Controls the endosome-to-Golgi trafficking of furin and mannose-6-phosphate receptor by connecting the acidic-cluster-containing cytoplasmic domain of these molecules with the adapter-protein complex-1 (AP-1) of endosomal clathrin-coated membrane pits. Required for normal ER Ca2+ handling in lymphocytes. Together with WDR37, it plays an essential role in lymphocyte development, quiescence and survival. Required for stabilizing peripheral lymphocyte populations. This is Phosphofurin acidic cluster sorting protein 1 (Pacs1) from Mus musculus (Mouse).